A 335-amino-acid polypeptide reads, in one-letter code: Zinc-type alcohol dehydrogenase-like protein SAS2087 (335 aa).

Belongs to the zinc-containing alcohol dehydrogenase family. Quinone oxidoreductase subfamily.

The polypeptide is Zinc-type alcohol dehydrogenase-like protein SAS2087 (Staphylococcus aureus (strain MSSA476)).